A 467-amino-acid chain; its full sequence is Uronate isomerase (467 aa).

Belongs to the metallo-dependent hydrolases superfamily. Uronate isomerase family.

It carries out the reaction D-glucuronate = D-fructuronate. It catalyses the reaction aldehydo-D-galacturonate = keto-D-tagaturonate. It participates in carbohydrate metabolism; pentose and glucuronate interconversion. The protein is Uronate isomerase of Clostridium acetobutylicum (strain ATCC 824 / DSM 792 / JCM 1419 / IAM 19013 / LMG 5710 / NBRC 13948 / NRRL B-527 / VKM B-1787 / 2291 / W).